The primary structure comprises 101 residues: PAT complex subunit Asterix (101 aa).

The disordered stretch occupies residues methionine 1–aspartate 26. Residues methionine 1–proline 27 are Cytoplasmic-facing. The helical transmembrane segment at threonine 28–leucine 46 threads the bilayer. Position 47 (lysine 47) is a topological domain, lumenal. The chain crosses the membrane as a helical span at residues leucine 48–asparagine 65. The Cytoplasmic segment spans residues serine 66–serine 69. Residues glutamate 70–tyrosine 90 form a helical membrane-spanning segment. At leucine 91–tryptophan 101 the chain is on the lumenal side.

Belongs to the Asterix family. In terms of assembly, component of the multi-pass translocon (MPT) complex.

The protein resides in the endoplasmic reticulum membrane. In terms of biological role, component of the multi-pass translocon (MPT) complex that mediates insertion of multi-pass membrane proteins into the lipid bilayer of membranes. The MPT complex takes over after the SEC61 complex: following membrane insertion of the first few transmembrane segments of proteins by the SEC61 complex, the MPT complex occludes the lateral gate of the SEC61 complex to promote insertion of subsequent transmembrane regions. This Gallus gallus (Chicken) protein is PAT complex subunit Asterix (WDR83OS).